Here is a 326-residue protein sequence, read N- to C-terminus: Metallophosphoesterase domain-containing protein 1 (326 aa).

This sequence belongs to the UPF0046 family.

May have metallophosphoesterase activity (in vitro). In Mus musculus (Mouse), this protein is Metallophosphoesterase domain-containing protein 1 (Mpped1).